The sequence spans 96 residues: Small ribosomal subunit protein bS6 (96 aa).

This sequence belongs to the bacterial ribosomal protein bS6 family.

Binds together with bS18 to 16S ribosomal RNA. The polypeptide is Small ribosomal subunit protein bS6 (Streptococcus equi subsp. equi (strain 4047)).